The chain runs to 135 residues: Integration host factor subunit beta (135 aa).

Basic and acidic residues predominate over residues 83 to 92; that stretch reads GKELRERVDR. The tract at residues 83–135 is disordered; that stretch reads GKELRERVDRTVTQGGGMNGNGHAPHGKTGQSQLGSQSPASLHDDGQLNLVRS. A compositionally biased stretch (polar residues) spans 111-122; it reads TGQSQLGSQSPA.

Belongs to the bacterial histone-like protein family. As to quaternary structure, heterodimer of an alpha and a beta chain.

Its function is as follows. This protein is one of the two subunits of integration host factor, a specific DNA-binding protein that functions in genetic recombination as well as in transcriptional and translational control. The protein is Integration host factor subunit beta of Cupriavidus metallidurans (strain ATCC 43123 / DSM 2839 / NBRC 102507 / CH34) (Ralstonia metallidurans).